The following is a 182-amino-acid chain: Probable tyrosine phosphatase protein H4 (182 aa).

A Tyrosine-protein phosphatase domain is found at 1–182 (MEINKFICSQ…TVLKIQKSKI (182 aa)). Cysteine 142 (phosphocysteine intermediate) is an active-site residue.

Belongs to the protein-tyrosine phosphatase family.

The enzyme catalyses O-phospho-L-tyrosyl-[protein] + H2O = L-tyrosyl-[protein] + phosphate. In Microplitis demolitor (Parasitoid wasp), this protein is Probable tyrosine phosphatase protein H4 (H5).